Reading from the N-terminus, the 174-residue chain is Bifunctional protein PyrR 2 (174 aa).

Residues 39-40 (TR), 100-108 (DDVLFTGRT), and Arg133 contribute to the substrate site. The short motif at 96-108 (VILVDDVLFTGRT) is the PRPP-binding element.

It belongs to the purine/pyrimidine phosphoribosyltransferase family. PyrR subfamily. As to quaternary structure, homodimer and homohexamer; in equilibrium.

It catalyses the reaction UMP + diphosphate = 5-phospho-alpha-D-ribose 1-diphosphate + uracil. Functionally, regulates transcriptional attenuation of the pyrimidine nucleotide (pyr) operon by binding in a uridine-dependent manner to specific sites on pyr mRNA. This disrupts an antiterminator hairpin in the RNA and favors formation of a downstream transcription terminator, leading to a reduced expression of downstream genes. In terms of biological role, also displays a weak uracil phosphoribosyltransferase activity which is not physiologically significant. The protein is Bifunctional protein PyrR 2 (pyrR2) of Lactiplantibacillus plantarum (strain ATCC BAA-793 / NCIMB 8826 / WCFS1) (Lactobacillus plantarum).